The primary structure comprises 126 residues: Small ribosomal subunit protein uS11 (126 aa).

It belongs to the universal ribosomal protein uS11 family. In terms of assembly, part of the 30S ribosomal subunit.

Functionally, located on the platform of the 30S subunit. The sequence is that of Small ribosomal subunit protein uS11 from Methanosarcina mazei (strain ATCC BAA-159 / DSM 3647 / Goe1 / Go1 / JCM 11833 / OCM 88) (Methanosarcina frisia).